The primary structure comprises 701 residues: UvrABC system protein B (701 aa).

A Helicase ATP-binding domain is found at 28–188; the sequence is RRIRAGERDV…VDVQYTRNDL (161 aa). An ATP-binding site is contributed by 41 to 48; sequence GATGTGKS. The Beta-hairpin motif lies at 94-117; it reads YYDYYQPEAYIAQTDTYIEKDSSI. Residues 432–598 form the Helicase C-terminal domain; it reads QIDDLIGEIR…PLRKKIADIL (167 aa). A disordered region spans residues 606–636; sequence DDTEAAESVPIGGSGRNSSRGRRAQGEPGRA. Residues 656–691 form the UVR domain; the sequence is ADLIKDLTSQMMVAARDLQFELAARFRDEIADLKKE.

This sequence belongs to the UvrB family. As to quaternary structure, forms a heterotetramer with UvrA during the search for lesions. Interacts with UvrC in an incision complex.

It is found in the cytoplasm. In terms of biological role, the UvrABC repair system catalyzes the recognition and processing of DNA lesions. A damage recognition complex composed of 2 UvrA and 2 UvrB subunits scans DNA for abnormalities. Upon binding of the UvrA(2)B(2) complex to a putative damaged site, the DNA wraps around one UvrB monomer. DNA wrap is dependent on ATP binding by UvrB and probably causes local melting of the DNA helix, facilitating insertion of UvrB beta-hairpin between the DNA strands. Then UvrB probes one DNA strand for the presence of a lesion. If a lesion is found the UvrA subunits dissociate and the UvrB-DNA preincision complex is formed. This complex is subsequently bound by UvrC and the second UvrB is released. If no lesion is found, the DNA wraps around the other UvrB subunit that will check the other stand for damage. This is UvrABC system protein B from Mycobacterium ulcerans (strain Agy99).